Reading from the N-terminus, the 85-residue chain is MAPPLSPVSKLLIGLIRGYQLVISPLLGPHCRFRPTCSQYGIEAIRRFGMLKGSWLTLKRVLKCHPLNPGGEDPVPPKNFDNREH.

This sequence belongs to the UPF0161 family.

It localises to the cell inner membrane. Could be involved in insertion of integral membrane proteins into the membrane. This chain is Putative membrane protein insertion efficiency factor, found in Sodalis glossinidius (strain morsitans).